The following is a 99-amino-acid chain: uncharacterized protein (99 aa).

Transmembrane regions (helical) follow at residues 7-29 (FFIS…YTLY), 39-61 (FISS…ARYN), and 68-90 (FCNL…LWLL).

It is found in the cell membrane. This is an uncharacterized protein from Archaeoglobus fulgidus (strain ATCC 49558 / DSM 4304 / JCM 9628 / NBRC 100126 / VC-16).